A 1670-amino-acid chain; its full sequence is Hemolymph clottable protein (1670 aa).

Positions 1-14 (MKALILLLLGACQA) are cleaved as a signal peptide. A vittelogenin region spans residues 15 to 674 (LQPGLEYQYR…FANFVTTTIY (660 aa)). A Vitellogenin domain is found at 15–764 (LQPGLEYQYR…LKIDGQQRGL (750 aa)). N106 carries an N-linked (GlcNAc...) asparagine glycan. The span at 198–231 (SSYTTKTKSKTSSKTSSKTSSKTSSKTSKTGKTS) shows a compositional bias: low complexity. Residues 198–236 (SSYTTKTKSKTSSKTSSKTSSKTSSKTSKTGKTSPGQLA) are disordered. N-linked (GlcNAc...) asparagine glycans are attached at residues N319, N459, and N1301. Residues 1390 to 1550 (VSCTIDETKV…SWASPGEGCA (161 aa)) form the VWFD domain. Intrachain disulfides connect C1392–C1513 and C1414–C1549.

Homodimer; disulfide-linked. Also exists as oligomers. Glycosylated. Contains mannose and N-acetylglucosamine. In terms of processing, substrate of transglutaminase. Widely expressed with highest levels in gill and heart. Not expressed in hemocytes.

The protein localises to the secreted. Its function is as follows. Forms stable clots in the presence of calcium. In Penaeus monodon (Giant tiger prawn), this protein is Hemolymph clottable protein.